Reading from the N-terminus, the 506-residue chain is MDLQSMPQKPAEAFPLIAALDLGSNSFHLCLAKANIHGEVRILERLGEKVQLAAGLDEERNLSEEATQRGLDCLRRFAQFISGMPQGSVRVVATNALREARNRSDFIRRAEEVLGHPVEVISGREEARLIYLGVANSMPDSGGRRLVSDIGGGSTEFIIGQGFESELRESLQMGCVSYTQRYFRDGKITPARYAQAYTAARLELMGIENSLRRLGWQQAVGASGTIRAVALAIKAGGHGNGEISPDGLAWLKRKVLKLGDVEKLDLEGIKPDRRTIFPAGLAILEAIFDALELEQMVHSEGALREGVLYDLVGRHQHEDVRERTISSLMQRYHVDPEQASRVEAKALKVLAEVGDAWELNGELHRDLLSWGARVHEIGLDIAHYHYHKHGAYLIEHSDLAGFSRQDQQMLSLLVRGHRRNIPADKLAEFAEEGDKLVRLCIVLRFAILFHHIRGTQEMPSVRLKAEPKSLSVTFPEGWLEANPLTQADFAQEAEWLKRVGYSLNVR.

It belongs to the GppA/Ppx family. Homodimer. The cofactor is Mg(2+).

It localises to the cell membrane. The catalysed reaction is [phosphate](n) + H2O = [phosphate](n-1) + phosphate + H(+). The enzyme catalyses [phosphate](n) + ATP = [phosphate](n+1) + ADP. With respect to regulation, exopolyphosphatase activity is stimulated by NH(4)(+) and K(+). Phosphotransferase activity is insensitive to the addition of K(+) or NH(4)(+) ions. Degradation of inorganic polyphosphates (polyP). Releases orthophosphate processively from the ends of the polyP chain. Also has polyphosphate:ADP phosphotransferase activity, catalyzing the production of ATP from ADP and polyP. The sequence is that of Exopolyphosphatase from Pseudomonas aeruginosa (strain ATCC 15692 / DSM 22644 / CIP 104116 / JCM 14847 / LMG 12228 / 1C / PRS 101 / PAO1).